A 1055-amino-acid chain; its full sequence is Auxin response factor 16 (1055 aa).

The TF-B3 DNA-binding region spans 127-229 (FCKTLTASDT…QLLLGIRRAT (103 aa)). Disordered stretches follow at residues 485–510 (PVMS…QQSS), 532–565 (QEHL…EQTS), 585–609 (SQLQ…PIAG), 701–720 (SDSI…LNHM), and 732–769 (SHSA…SRNL). Low complexity-rich tracts occupy residues 488–510 (SQHQ…QQSS) and 532–552 (QEHL…ASSL). Residues 742 to 756 (PSSSTAPSTSRISPI) show a composition bias toward low complexity. Residues 757 to 769 (NSLSRANQGSRNL) show a composition bias toward polar residues. A PB1 domain is found at 940 to 1024 (RTFTKVQKRG…KSIKILSAAE (85 aa)). Residues 1034 to 1055 (LGGVPPQTQACSASDDANAWRG) form a disordered region.

This sequence belongs to the ARF family. Homodimers and heterodimers. Expressed in roots, culms, leaves and young panicles.

The protein localises to the nucleus. Auxin response factors (ARFs) are transcriptional factors that bind specifically to the DNA sequence 5'-TGTCTC-3' found in the auxin-responsive promoter elements (AuxREs). This chain is Auxin response factor 16 (ARF16), found in Oryza sativa subsp. japonica (Rice).